Here is a 574-residue protein sequence, read N- to C-terminus: Septation ring formation regulator EzrA (574 aa).

Residues 1–7 are Extracellular-facing; that stretch reads MSSGIVL. A helical membrane pass occupies residues 8–26; that stretch reads LIVAIVLVVIIAYLIAIII. The Cytoplasmic segment spans residues 27 to 574; the sequence is RKRNDSLITK…YEKTRETIRF (548 aa). Coiled-coil stretches lie at residues 102 to 141, 255 to 368, and 409 to 495; these read NFIR…EEKN, KNIE…KDVL, and LKNI…EETA.

This sequence belongs to the EzrA family.

It is found in the cell membrane. Negative regulator of FtsZ ring formation; modulates the frequency and position of FtsZ ring formation. Inhibits FtsZ ring formation at polar sites. Interacts either with FtsZ or with one of its binding partners to promote depolymerization. This Streptococcus mutans serotype c (strain ATCC 700610 / UA159) protein is Septation ring formation regulator EzrA.